An 88-amino-acid chain; its full sequence is Small ribosomal subunit protein bS20 (88 aa).

The protein belongs to the bacterial ribosomal protein bS20 family.

In terms of biological role, binds directly to 16S ribosomal RNA. This is Small ribosomal subunit protein bS20 from Bartonella tribocorum (strain CIP 105476 / IBS 506).